A 368-amino-acid polypeptide reads, in one-letter code: Branched-chain-amino-acid aminotransferase (368 aa).

Pyridoxal 5'-phosphate is bound at residue Arg-101. Position 204 is an N6-(pyridoxal phosphate)lysine (Lys-204). Pyridoxal 5'-phosphate-binding positions include Tyr-209, 271-272 (IT), and Thr-314.

The protein belongs to the class-IV pyridoxal-phosphate-dependent aminotransferase family. As to quaternary structure, homodimer. Pyridoxal 5'-phosphate is required as a cofactor.

The catalysed reaction is L-leucine + 2-oxoglutarate = 4-methyl-2-oxopentanoate + L-glutamate. The enzyme catalyses L-isoleucine + 2-oxoglutarate = (S)-3-methyl-2-oxopentanoate + L-glutamate. It carries out the reaction L-valine + 2-oxoglutarate = 3-methyl-2-oxobutanoate + L-glutamate. The protein operates within amino-acid biosynthesis; L-isoleucine biosynthesis; L-isoleucine from 2-oxobutanoate: step 4/4. It functions in the pathway amino-acid biosynthesis; L-leucine biosynthesis; L-leucine from 3-methyl-2-oxobutanoate: step 4/4. It participates in amino-acid biosynthesis; L-valine biosynthesis; L-valine from pyruvate: step 4/4. Catalyzes the reversible transfers of an amino group from glutamate to the alpha-ketoacid of the respective amino acid in the final step in the biosynthesis of branchedchain amino acids. The sequence is that of Branched-chain-amino-acid aminotransferase (ilvE) from Mycobacterium tuberculosis (strain CDC 1551 / Oshkosh).